A 256-amino-acid polypeptide reads, in one-letter code: Type III pantothenate kinase (256 aa).

ATP is bound at residue 6 to 13; sequence DVGNTNTV. Residues tyrosine 100 and 107 to 110 contribute to the substrate site; that span reads GADR. The active-site Proton acceptor is the aspartate 109. Residue aspartate 129 coordinates K(+). Threonine 132 contributes to the ATP binding site. Threonine 184 serves as a coordination point for substrate.

This sequence belongs to the type III pantothenate kinase family. Homodimer. NH4(+) serves as cofactor. Requires K(+) as cofactor.

It localises to the cytoplasm. The enzyme catalyses (R)-pantothenate + ATP = (R)-4'-phosphopantothenate + ADP + H(+). The protein operates within cofactor biosynthesis; coenzyme A biosynthesis; CoA from (R)-pantothenate: step 1/5. Functionally, catalyzes the phosphorylation of pantothenate (Pan), the first step in CoA biosynthesis. The sequence is that of Type III pantothenate kinase from Myxococcus xanthus (strain DK1622).